A 2513-amino-acid polypeptide reads, in one-letter code: Highly reducing polyketide synthase ACRTS2 (2513 aa).

The Ketosynthase family 3 (KS3) domain maps to 4–429; sequence DTPVAIIGVS…GSSSAVIIDR (426 aa). Residues Cys-174, His-313, and His-353 each act as for beta-ketoacyl synthase activity in the active site. The interval 547 to 875 is malonyl-CoA:ACP transacylase (MAT) domain; sequence VFTGQGAQYA…NYLPSLLRGT (329 aa). The active-site For malonyltransferase activity is the Ser-635. Residues 942-1074 form an N-terminal hotdog fold region; it reads HALIGRKAPS…GKIEPEIADL (133 aa). The interval 942–1253 is dehydratase (DH) domain; the sequence is HALIGRKAPS…TFRTVSSADD (312 aa). The 313-residue stretch at 942–1254 folds into the PKS/mFAS DH domain; sequence HALIGRKAPS…FRTVSSADDQ (313 aa). The Proton acceptor; for dehydratase activity role is filled by His-974. The segment at 1092–1254 is C-terminal hotdog fold; that stretch reads AGVIEHDMDN…FRTVSSADDQ (163 aa). Catalysis depends on Asp-1161, which acts as the Proton donor; for dehydratase activity. The segment at 1407–1600 is methyltransferase (CMet) domain; it reads SKIIGYLTEN…IPTNYRTDNP (194 aa). Positions 1816-2127 are enoylreductase (ER) domain; the sequence is GSPDTIYFRR…SRDHIGRLVV (312 aa). The interval 2152 to 2327 is ketoreductase (KR) domain; the sequence is ATYLVAGGTR…YTVSIGLPVV (176 aa). Residues 2433-2510 enclose the Carrier domain; that stretch reads DPLTGLIEAL…ALAVNILAQR (78 aa). Position 2470 is an O-(pantetheine 4'-phosphoryl)serine (Ser-2470).

The protein operates within mycotoxin biosynthesis. Highly reducing polyketide synthase; part of the gene cluster that mediates the biosynthesis of the host-selective toxins (HSTs) ACR-toxins responsible for brown spot of rough lemon disease by the rough lemon pathotype. ACR-toxins cause uncoupling of mitochondrial oxidative-phosphorylation similar to that of classic protonophore. The structure of the major form of ACR-toxin (ACR-toxin I) consists of an alpha-dihydropyrone ring in a 19-carbon polyalcohol, a typical polyketide structure. Minor toxins were characterized as having a pyrone ring with polyalcohol side chains different in length and showing weaker toxicity. The highly reducing polyketide synthase ACRTS2 has all necessary enzymatic domains for multiple cycles of condensation and beta-keto processing. The cytochrome P450 monooxygenase ACRTS1 has also been shown to be essential for ACR-toxin biosynthesis, however its exact role in the pathway has not been elucidated yet. The protein is Highly reducing polyketide synthase ACRTS2 of Alternaria alternata (Alternaria rot fungus).